The sequence spans 1336 residues: Zinc finger protein 335 (1336 aa).

Disordered stretches follow at residues 1–108 (MEEN…LVHS) and 199–222 (PTST…LAQP). 2 stretches are compositionally biased toward low complexity: residues 31–45 (TSEA…AATA) and 54–65 (SGVGQSSDSGSR). The C2H2-type 1 zinc-finger motif lies at 247–270 (FKCKMCQYRSSTKATLLRHMRERH). Disordered regions lie at residues 282 to 398 (AGKR…PSSS) and 415 to 442 (VSQS…GRPS). Positions 300–331 (EEGPEEEEEDDDIVDAGAIDDLEEDSDYNPAE) are enriched in acidic residues. The segment covering 339–349 (LRLQRPTPSTL) has biased composition (low complexity). The segment covering 350 to 361 (RPRRRPGRPRKL) has biased composition (basic residues). Basic and acidic residues predominate over residues 362–373 (PRLETSDLHDGI). The segment covering 378-387 (VSSQSTQSPP) has biased composition (polar residues). 8 consecutive C2H2-type zinc fingers follow at residues 465–487 (YLCR…VNSH), 495–517 (FKCL…MFNH), 523–545 (YKCD…AAVH), 562–584 (FPCP…MKTH), 590–612 (HMCD…LLTH), 621–643 (FKCE…QLSH), 649–672 (FKCS…AVKH), and 678–701 (FACE…RCRH). 2 disordered regions span residues 732–766 (LKQQ…TPPL) and 961–1013 (LQCG…AAAS). Residues 752-766 (PQEPAPFQPPETPPL) show a composition bias toward pro residues. Phosphoserine occurs at positions 975 and 1006. C2H2-type zinc fingers lie at residues 1018 to 1040 (FSCK…KRAH), 1046 to 1068 (FKCP…MAQH), 1074 to 1096 (HQCN…MLTH), and 1102 to 1125 (FSCH…QRLH). Residue lysine 1021 forms a Glycyl lysine isopeptide (Lys-Gly) (interchain with G-Cter in SUMO2) linkage. Serine 1148 bears the Phosphoserine mark.

Belongs to the krueppel C2H2-type zinc-finger protein family. As to quaternary structure, interacts with NCOA6; may enhance ligand-dependent transcriptional activation by nuclear hormone receptors. Interacts with CNOT6. Interacts with CNOT9; the interaction is direct. Component of a nuclear receptor-mediated transcription complex composed of at least ZNF335, CCAR2 and EMSY; the complex stimulates the transcription of nuclear receptor target genes such as SOX9 and HOXA1. Within the complex interacts with EMSY and interacts (via C-terminus) with CCAR2. Interacts with members of histone H3'Lys4'(H3K4) methyltransferase complexes ASH2L, CXXC1, KMT2A/MLL1, RBBP5, SETD1A and WDR5. Component of a histone methylation complex composed of at least ZNF335, RBBP5, ASH2L and WDR5; the complex may have histone H3-specific methyltransferase activity, however does not have specificity for 'Lys-4' of histone H3. Interacts with RBBP5 and WDR5. Interacts with ASHL2. Components of this complex may associate with components of the ZNF335-CCAR2-EMSY nuclear receptor-mediated transcription complex to form a complex at least composed of ZNF335, HCFC1, CCAR2, EMSY, MKI67, RBBP5, ASH2L and WDR5. Within this complex also interacts with HCFC1 and MKI67.

The protein resides in the nucleus. Functionally, component or associated component of some histone methyltransferase complexes may regulate transcription through recruitment of those complexes on gene promoters. Enhances ligand-dependent transcriptional activation by nuclear hormone receptors. Plays an important role in neural progenitor cell proliferation and self-renewal through the regulation of specific genes involved brain development, including REST. Also controls the expression of genes involved in somatic development and regulates, for instance, lymphoblast proliferation. This is Zinc finger protein 335 (Znf335) from Rattus norvegicus (Rat).